The chain runs to 208 residues: Small ribosomal subunit protein uS4 (208 aa).

The region spanning 98-158 (RRLDNIAYRL…EKSRKVACIN (61 aa)) is the S4 RNA-binding domain.

The protein belongs to the universal ribosomal protein uS4 family. As to quaternary structure, part of the 30S ribosomal subunit. Contacts protein S5. The interaction surface between S4 and S5 is involved in control of translational fidelity.

Functionally, one of the primary rRNA binding proteins, it binds directly to 16S rRNA where it nucleates assembly of the body of the 30S subunit. Its function is as follows. With S5 and S12 plays an important role in translational accuracy. The chain is Small ribosomal subunit protein uS4 from Geotalea uraniireducens (strain Rf4) (Geobacter uraniireducens).